Consider the following 426-residue polypeptide: Outer capsid protein P8 (426 aa).

The protein belongs to the phytoreovirus outer capsid protein P8 family. Homotrimer. Homomultimer.

It is found in the virion. Its subcellular location is the host cytoplasm. Its function is as follows. Capsid protein which self-assembles to form the outer icosahedral capsid with a T=13 symmetry, about 70 nm in diameter and consisting of 260 P8 trimers. Mediates the secretion of assembled virus-like particles from host insect cells. The polypeptide is Outer capsid protein P8 (Nephotettix cincticeps (Green rice leafhopper)).